Reading from the N-terminus, the 880-residue chain is Alanine--tRNA ligase (880 aa).

Histidine 558, histidine 562, cysteine 663, and histidine 667 together coordinate Zn(2+).

It belongs to the class-II aminoacyl-tRNA synthetase family. Zn(2+) serves as cofactor.

It localises to the cytoplasm. The enzyme catalyses tRNA(Ala) + L-alanine + ATP = L-alanyl-tRNA(Ala) + AMP + diphosphate. Its function is as follows. Catalyzes the attachment of alanine to tRNA(Ala) in a two-step reaction: alanine is first activated by ATP to form Ala-AMP and then transferred to the acceptor end of tRNA(Ala). Also edits incorrectly charged Ser-tRNA(Ala) and Gly-tRNA(Ala) via its editing domain. This chain is Alanine--tRNA ligase, found in Mycoplasmopsis agalactiae (strain NCTC 10123 / CIP 59.7 / PG2) (Mycoplasma agalactiae).